Consider the following 421-residue polypeptide: U-box domain-containing protein 25 (421 aa).

The 76-residue stretch at Gln13–Asn88 folds into the U-box domain.

It carries out the reaction S-ubiquitinyl-[E2 ubiquitin-conjugating enzyme]-L-cysteine + [acceptor protein]-L-lysine = [E2 ubiquitin-conjugating enzyme]-L-cysteine + N(6)-ubiquitinyl-[acceptor protein]-L-lysine.. It functions in the pathway protein modification; protein ubiquitination. Functions as an E3 ubiquitin ligase. The polypeptide is U-box domain-containing protein 25 (PUB25) (Arabidopsis thaliana (Mouse-ear cress)).